The primary structure comprises 586 residues: Phosphomethylpyrimidine synthase (586 aa).

The segment at M1–V33 is disordered. Residues V22–V33 are compositionally biased toward basic and acidic residues. Substrate is bound by residues N193, M222, Y251, H287, S307–G309, D348–R351, and E387. H391 serves as a coordination point for Zn(2+). Y414 provides a ligand contact to substrate. H455 lines the Zn(2+) pocket. Positions 535, 538, and 543 each coordinate [4Fe-4S] cluster.

Belongs to the ThiC family. Requires [4Fe-4S] cluster as cofactor.

The catalysed reaction is 5-amino-1-(5-phospho-beta-D-ribosyl)imidazole + S-adenosyl-L-methionine = 4-amino-2-methyl-5-(phosphooxymethyl)pyrimidine + CO + 5'-deoxyadenosine + formate + L-methionine + 3 H(+). Its pathway is cofactor biosynthesis; thiamine diphosphate biosynthesis. Functionally, catalyzes the synthesis of the hydroxymethylpyrimidine phosphate (HMP-P) moiety of thiamine from aminoimidazole ribotide (AIR) in a radical S-adenosyl-L-methionine (SAM)-dependent reaction. This chain is Phosphomethylpyrimidine synthase, found in Bacillus cereus (strain B4264).